A 206-amino-acid chain; its full sequence is uncharacterized protein (206 aa).

Residues 147 to 206 form a disordered region; it reads REEKAQKSKSKSRNQDERGSPLDERLGPKVSDLTLMERIFQVRRKPRKSRRDRRSRVSKR. The segment covering 159–173 has biased composition (basic and acidic residues); sequence RNQDERGSPLDERLG. Residues 187–206 show a composition bias toward basic residues; the sequence is QVRRKPRKSRRDRRSRVSKR.

This is an uncharacterized protein from Schizosaccharomyces pombe (strain 972 / ATCC 24843) (Fission yeast).